We begin with the raw amino-acid sequence, 611 residues long: MNDNNKIIRSMVLYLLIFIAIYAMVQLYSQSTEPITDIDYGQLIKYIDANQVKSITLVGNDVKGVLKNGTEFKSRVPDVTNFMSFVNPYILQGKLDFKSEPQVGPPWWVQMLPSLFLIVIFIIFWYIFMQQAQGGGGSKVMSFGKSRARMITDKDKRVTFNDVAGADEEKEELQEIVEFLKYPKKFLELGARIPKGVLLVGPPGTGKTLLAKAVAGEAGVPFFSISGSDFVEMFVGVGAARVRDLFDQAKKNAPCIVFIDEIDAVGRQRGAGLGGGHDEREQTLNQLLVEMDGFSVNEGIIVIAATNRPDILDPALLRPGRFDRHITVGIPDIKGREEILKIHSRNKPLAPDVSLQVLARRTPGFTGADLENLMNEAALLAARRGLKQITMAELEEAITRVIAGPEKRSRIMSEKDKKLVAYHEAGHAVVAKLLPNTPPVHEVTIIPRGRAGGYTMLLPEEDKYYMSKSEMMDEIVHLLGGRVAESLVLNDISTGAQNDIERATNIARKMVTEYGMSERLGPMTFGTKSEEVFLGRDLGRTRNYSEEVAAEIDREIKRIIEEAYKRAESLLKENIDKLHRVAKALIEKEKLNGEEFEKVFNGEDIEGVQFA.

The Cytoplasmic segment spans residues 1-6; the sequence is MNDNNK. Residues 7 to 27 form a helical membrane-spanning segment; it reads IIRSMVLYLLIFIAIYAMVQL. Over 28 to 107 the chain is Extracellular; that stretch reads YSQSTEPITD…KSEPQVGPPW (80 aa). A helical transmembrane segment spans residues 108–128; that stretch reads WVQMLPSLFLIVIFIIFWYIF. Position 124-131 (124-131) interacts with ATP; it reads FWYIFMQQ. The Cytoplasmic segment spans residues 129 to 611; sequence MQQAQGGGGS…GEDIEGVQFA (483 aa). H423 serves as a coordination point for Zn(2+). E424 is an active-site residue. Zn(2+) is bound by residues H427 and D499.

The protein in the central section; belongs to the AAA ATPase family. In the C-terminal section; belongs to the peptidase M41 family. As to quaternary structure, homohexamer. Requires Zn(2+) as cofactor.

The protein resides in the cell membrane. Acts as a processive, ATP-dependent zinc metallopeptidase for both cytoplasmic and membrane proteins. Plays a role in the quality control of integral membrane proteins. The polypeptide is ATP-dependent zinc metalloprotease FtsH 1 (Thermoanaerobacter sp. (strain X514)).